Here is a 646-residue protein sequence, read N- to C-terminus: FAD-binding monooxygenase prhK (646 aa).

An N-linked (GlcNAc...) asparagine glycan is attached at Asn46. Residues 80 to 97 (IIIIGAGFGGLLFAVRLI) traverse the membrane as a helical segment. FAD-binding positions include 119 to 122 (TWYW), 131 to 132 (DT), and Tyr137. 129-131 (MCD) contributes to the NADP(+) binding site. NADP(+) is bound by residues 275 to 281 (TGATAIQ) and 298 to 299 (RT). 3 N-linked (GlcNAc...) asparagine glycosylation sites follow: Asn429, Asn483, and Asn529.

The protein belongs to the FAD-binding monooxygenase family. Requires FAD as cofactor.

It localises to the membrane. It catalyses the reaction preaustinoid A + AH2 + O2 = preaustinoid A1 + A + H2O. It functions in the pathway secondary metabolite biosynthesis; terpenoid biosynthesis. FAD-binding monooxygenase; part of the gene cluster that mediates the biosynthesis of paraherquonin, a meroterpenoid with a unique, highly congested hexacyclic molecular architecture. The first step of the pathway is the synthesis of 3,5-dimethylorsellinic acid (DMOA) by the polyketide synthase prhL. Synthesis of DMOA is followed by farnesylation by the prenyltransferase prhE, methylesterification by the methyl-transferase prhM, epoxidation of the prenyl chain by the flavin-dependent monooxygenase prhF, and cyclization of the farnesyl moiety by the terpene cyclase prhH, to yield the tetracyclic intermediate, protoaustinoid A. The short chain dehydrogenase prhI then oxidizes the C-3 alcohol group of the terpene cyclase product to transform protoaustinoid A into protoaustinoid B. The FAD-binding monooxygenase prhJ catalyzes the oxidation of protoaustinoid B into preaustinoid A which is further oxidized into preaustinoid A1 by FAD-binding monooxygenase phrK. Finally, prhA leads to berkeleydione via the berkeleyone B intermediate. PrhA is a multifunctional dioxygenase that first desaturates at C5-C6 to form berkeleyone B, followed by rearrangement of the A/B-ring to form the cycloheptadiene moiety in berkeleydione. Berkeleydione serves as the key intermediate for the biosynthesis of paraherquonin as well as many other meroterpenoids. The cytochrome P450 monooxygenases prhB, prhD, and prhN, as well as the isomerase prhC, are probably involved in the late stage of paraherquonin biosynthesis, after the production of berkeleydione. Especially prhC might be a multifunctional enzyme that catalyzes the D-ring expansion via intramolecular methoxy rearrangement, as well as the hydrolysis of the expanded D-ring. This chain is FAD-binding monooxygenase prhK, found in Penicillium brasilianum.